The chain runs to 215 residues: Adenylate kinase (215 aa).

10-15 (GAGKGT) provides a ligand contact to ATP. Residues 30-59 (STGDMFRAAMKNNTELGKKAKSFMDNGDLV) are NMP. AMP is bound by residues T31, R36, 57–59 (DLV), 85–88 (GFPR), and Q92. Residues 126–163 (GRWICRTCGKTYHEIYNPPKVPGKCDLDGGELYQREDD) are LID. Position 127 (R127) interacts with ATP. C130 and C133 together coordinate Zn(2+). 136 to 137 (TY) provides a ligand contact to ATP. C150 and D153 together coordinate Zn(2+). AMP-binding residues include R160 and R171. Q199 contacts ATP.

This sequence belongs to the adenylate kinase family. Monomer.

The protein resides in the cytoplasm. The enzyme catalyses AMP + ATP = 2 ADP. Its pathway is purine metabolism; AMP biosynthesis via salvage pathway; AMP from ADP: step 1/1. Catalyzes the reversible transfer of the terminal phosphate group between ATP and AMP. Plays an important role in cellular energy homeostasis and in adenine nucleotide metabolism. The sequence is that of Adenylate kinase from Listeria innocua serovar 6a (strain ATCC BAA-680 / CLIP 11262).